Consider the following 182-residue polypeptide: MNDKINHLIKITGWFTVIFFLLLIIVSCTVWQIGWIDIISYTVTISTFITIGYERFMWKWKLFRIFNKQADISGDYEATLRYFYGESGIKKVSVEIKQTFLTVNIELRSDEITSNSITADIIEEHGKNILYYTYITNPKAEFEKKNPINRGTTRLIVGENELTGKYWTGAETTGDLRLKKLK.

Transmembrane regions (helical) follow at residues 11-31 (ITGW…CTVW) and 33-53 (IGWI…TIGY).

Belongs to the CBASS Cap15 membrane effector family. In terms of assembly, the beta barrel domain oligomerizes; in the presence of cyclic nucleotides (probably 3',2'-cGAMP) higher-level oligomers occur.

It is found in the cell membrane. Functionally, effector protein of a CBASS antivirus system. CBASS (cyclic oligonucleotide-based antiphage signaling system) provides immunity against bacteriophage. The CD-NTase protein (CdnE) synthesizes cyclic nucleotides in response to infection; these serve as specific second messenger signals. The signals activate a diverse range of effectors, leading to bacterial cell death and thus abortive phage infection. This system triggers membrane disruption without lysis. A type I-B CBASS system. Binds cyclic nucleotide second messenger 3',2'-cGAMP, probably oligomerizing, and induces cell membrane shrinkage and rupture, leading to cell death. Protects S.aureus against phage infection. When the CBASS operon (cdnE-cap15) is introduced in S.aureus strain RN4220 there is strong protection against lytic DNA phages 80alpha-vir and phi-NM1-gamma-6 but little to no protection against phages phi-NM4-gamma-4 or phi-12-gamma-3. The protein is CD-NTase-associated protein 15 of Staphylococcus schleiferi.